Here is a 337-residue protein sequence, read N- to C-terminus: 5-formaminoimidazole-4-carboxamide-1-(beta)-D-ribofuranosyl 5'-monophosphate synthetase (337 aa).

5-amino-1-(5-phospho-beta-D-ribosyl)imidazole-4-carboxamide-binding residues include histidine 14 and serine 74. Residues 81 to 328 (VELVERMKVP…IAREIRLAIE (248 aa)) form the ATP-grasp domain. ATP contacts are provided by residues 125–185 (PDDI…VPVY) and glutamate 207. Asparagine 235 provides a ligand contact to 5-amino-1-(5-phospho-beta-D-ribosyl)imidazole-4-carboxamide. 2 residues coordinate Mg(2+): glutamate 273 and glutamate 286.

The protein belongs to the phosphohexose mutase family. It depends on Mg(2+) as a cofactor. Requires Mn(2+) as cofactor.

It catalyses the reaction 5-amino-1-(5-phospho-beta-D-ribosyl)imidazole-4-carboxamide + formate + ATP = 5-formamido-1-(5-phospho-D-ribosyl)imidazole-4-carboxamide + ADP + phosphate. It participates in purine metabolism; IMP biosynthesis via de novo pathway; 5-formamido-1-(5-phospho-D-ribosyl)imidazole-4-carboxamide from 5-amino-1-(5-phospho-D-ribosyl)imidazole-4-carboxamide (formate route): step 1/1. Functionally, catalyzes the ATP- and formate-dependent formylation of 5-aminoimidazole-4-carboxamide-1-beta-d-ribofuranosyl 5'-monophosphate (AICAR) to 5-formaminoimidazole-4-carboxamide-1-beta-d-ribofuranosyl 5'-monophosphate (FAICAR) in the absence of folates. The chain is 5-formaminoimidazole-4-carboxamide-1-(beta)-D-ribofuranosyl 5'-monophosphate synthetase from Pyrococcus abyssi (strain GE5 / Orsay).